The following is a 674-amino-acid chain: Metal-nicotianamine transporter YSL2 (674 aa).

Residues Met1–Arg29 are disordered. A compositionally biased stretch (basic and acidic residues) spans Glu7 to Gly22. The next 14 membrane-spanning stretches (helical) occupy residues Gly41–Leu61, Gly64–Trp84, Cys118–Leu138, Gly162–Leu182, Gly224–Gly244, Leu283–Ile303, Phe329–Ile349, Leu392–Phe412, Val420–Leu440, Ile452–Val472, Val506–Phe526, Ser559–Ile579, Phe604–Trp624, and Ala633–Pro653.

Belongs to the YSL (TC 2.A.67.2) family. In terms of tissue distribution, expressed in phloem cells of vascular bundles in leaves and leaf sheaths. Expressed at low levels in phloem companion cells in the central cylinder of roots, but not in the epidermal or cortical cells.

The protein localises to the cell membrane. Involved in the phloem transport of iron and manganese and their translocation into the grain. Transports iron- and manganese-nicotianamine chelates, but not iron-phytosiderophore. In Oryza sativa subsp. japonica (Rice), this protein is Metal-nicotianamine transporter YSL2 (YSL2).